The sequence spans 380 residues: MAPNIRKSHPLLKMVNNSLIDLPTPSNISAWWNFGSLLAVCLVTQILTGLLLAMHYTADTTLAFSSVAHTCRNVQYGWLIRNLHANGASFFFICIFLHIGRGLYYGSYLYKETWNTGVILLLTLMATAFVGYVLPWGQMSFWGATVITNLFSAIPYIGQTLVEWAWGGFSVDNPTLTRFFALHFLLPFVIAGITIIHLTFLHESGSNNPLGISSNSDKIPFHPYYSIKDILGLTLMFIPFLTLALFSPNFLGDPENFTPANPLVTPPHIKPEWYFLFAYAILRSIPNKLGGVLALAASVLILLLIPFLHKSKQRTMTFRPLSQTLFWLLVANLLILTWIGSQPVEHPFIIIGQMASLSYFSILLILFPMIGTLENKILNY.

The next 4 helical transmembrane spans lie at 34-54 (FGSLLAVCLVTQILTGLLLAM), 78-99 (WLIRNLHANGASFFFICIFLHI), 114-134 (WNTGVILLLTLMATAFVGYVL), and 179-199 (FFALHFLLPFVIAGITIIHLT). 2 residues coordinate heme b: His-84 and His-98. Heme b is bound by residues His-183 and His-197. His-202 contributes to the a ubiquinone binding site. 4 helical membrane passes run 227 to 247 (IKDILGLTLMFIPFLTLALFS), 289 to 309 (LGGVLALAASVLILLLIPFLH), 321 to 341 (LSQTLFWLLVANLLILTWIGS), and 348 to 368 (FIIIGQMASLSYFSILLILFP).

Belongs to the cytochrome b family. In terms of assembly, the cytochrome bc1 complex contains 11 subunits: 3 respiratory subunits (MT-CYB, CYC1 and UQCRFS1), 2 core proteins (UQCRC1 and UQCRC2) and 6 low-molecular weight proteins (UQCRH/QCR6, UQCRB/QCR7, UQCRQ/QCR8, UQCR10/QCR9, UQCR11/QCR10 and a cleavage product of UQCRFS1). This cytochrome bc1 complex then forms a dimer. Heme b serves as cofactor.

Its subcellular location is the mitochondrion inner membrane. Functionally, component of the ubiquinol-cytochrome c reductase complex (complex III or cytochrome b-c1 complex) that is part of the mitochondrial respiratory chain. The b-c1 complex mediates electron transfer from ubiquinol to cytochrome c. Contributes to the generation of a proton gradient across the mitochondrial membrane that is then used for ATP synthesis. This is Cytochrome b (MT-CYB) from Alectoris chukar (Chukar partridge).